The chain runs to 607 residues: UvrABC system protein C (607 aa).

Positions 16-94 (ARPGVYRMFD…IKQWRPPYNI (79 aa)) constitute a GIY-YIG domain. One can recognise a UVR domain in the interval 203-238 (QQLGNELNAEMEKAAMALNFEKAAELRDQIALLRRV).

Belongs to the UvrC family. Interacts with UvrB in an incision complex.

The protein localises to the cytoplasm. The UvrABC repair system catalyzes the recognition and processing of DNA lesions. UvrC both incises the 5' and 3' sides of the lesion. The N-terminal half is responsible for the 3' incision and the C-terminal half is responsible for the 5' incision. The polypeptide is UvrABC system protein C (Pseudomonas putida (strain W619)).